Here is a 305-residue protein sequence, read N- to C-terminus: Protein FdhE homolog (305 aa).

This sequence belongs to the FdhE family.

It is found in the cytoplasm. In terms of biological role, necessary for formate dehydrogenase activity. The sequence is that of Protein FdhE homolog from Haemophilus ducreyi (strain 35000HP / ATCC 700724).